The following is a 220-amino-acid chain: Ribonuclease HII (220 aa).

Residues 32-220 (KHIVGIDEAG…FAPIKGRYSV (189 aa)) form the RNase H type-2 domain. 3 residues coordinate a divalent metal cation: aspartate 38, glutamate 39, and aspartate 130.

It belongs to the RNase HII family. Mn(2+) serves as cofactor. It depends on Mg(2+) as a cofactor.

The protein localises to the cytoplasm. The catalysed reaction is Endonucleolytic cleavage to 5'-phosphomonoester.. Functionally, endonuclease that specifically degrades the RNA of RNA-DNA hybrids. This is Ribonuclease HII from Brucella anthropi (strain ATCC 49188 / DSM 6882 / CCUG 24695 / JCM 21032 / LMG 3331 / NBRC 15819 / NCTC 12168 / Alc 37) (Ochrobactrum anthropi).